The chain runs to 290 residues: 1D-myo-inositol 2-acetamido-2-deoxy-alpha-D-glucopyranoside deacetylase (290 aa).

Positions 17, 20, and 150 each coordinate Zn(2+).

The protein belongs to the MshB deacetylase family. The cofactor is Zn(2+).

The enzyme catalyses 1D-myo-inositol 2-acetamido-2-deoxy-alpha-D-glucopyranoside + H2O = 1D-myo-inositol 2-amino-2-deoxy-alpha-D-glucopyranoside + acetate. In terms of biological role, catalyzes the deacetylation of 1D-myo-inositol 2-acetamido-2-deoxy-alpha-D-glucopyranoside (GlcNAc-Ins) in the mycothiol biosynthesis pathway. This chain is 1D-myo-inositol 2-acetamido-2-deoxy-alpha-D-glucopyranoside deacetylase, found in Corynebacterium glutamicum (strain R).